The primary structure comprises 76 residues: Protein sprouty homolog 1 (76 aa).

The region spanning 1–52 (NPCSCSQSHCCSRYLCMGAMSLFLPCLLCYPPAKGCLKLCRGCYDRVNRPGC) is the SPR domain.

Belongs to the sprouty family. Brain and interlimb region.

Its subcellular location is the cytoplasm. The protein localises to the membrane. Functionally, inhibits fibroblast growth factor (FGF)-induced retinal lens fiber differentiation. Inhibits TGFB-induced epithelial-to-mesenchymal transition in lens epithelial cells. This chain is Protein sprouty homolog 1 (SPRY1), found in Gallus gallus (Chicken).